Reading from the N-terminus, the 670-residue chain is Oxidoreductase PigB (670 aa).

The first 19 residues, 1–19 (MIIQRLFGILYMLAGLAKA), serve as a signal peptide directing secretion. A run of 4 helical transmembrane segments spans residues 53 to 73 (GDVI…ILML), 76 to 96 (LWTT…VVIL), 98 to 118 (QSQP…LYML), and 238 to 258 (LVFF…VGFI).

It belongs to the flavin monoamine oxidase family. FAD is required as a cofactor.

It is found in the membrane. Its pathway is antibiotic biosynthesis; prodigiosin biosynthesis. In terms of biological role, involved in the biosynthesis of 2-methyl-3-n-amyl-pyrrole (MAP), one of the terminal products involved in the biosynthesis of the red antibiotic prodigiosin (Pig). Catalyzes the oxidation of dihydro form of MAP (H2MAP) to yield MAP. This chain is Oxidoreductase PigB, found in Serratia sp. (strain ATCC 39006) (Prodigiosinella confusarubida).